The chain runs to 338 residues: Delta(9)-fatty-acid desaturase fat-7 (338 aa).

Helical transmembrane passes span valine 51–histidine 71, threonine 76–histidine 96, tyrosine 194–tryptophan 214, and alanine 218–tryptophan 238.

Belongs to the fatty acid desaturase type 1 family. Expressed in the intestine in adult worms and in all four larval stages.

It localises to the membrane. It carries out the reaction octadecanoyl-CoA + 2 Fe(II)-[cytochrome b5] + O2 + 2 H(+) = (9Z)-octadecenoyl-CoA + 2 Fe(III)-[cytochrome b5] + 2 H2O. The catalysed reaction is hexadecanoyl-CoA + 2 Fe(II)-[cytochrome b5] + O2 + 2 H(+) = (9Z)-hexadecenoyl-CoA + 2 Fe(III)-[cytochrome b5] + 2 H2O. The enzyme catalyses heptadecanoyl-CoA + 2 Fe(II)-[cytochrome b5] + O2 + 2 H(+) = (9Z)-heptadecenoyl-CoA + 2 Fe(III)-[cytochrome b5] + 2 H2O. It catalyses the reaction (11E)-octadecenoyl-CoA + 2 Fe(II)-[cytochrome b5] + O2 + 2 H(+) = (9Z,11E)-octadecadienoyl-CoA + 2 Fe(III)-[cytochrome b5] + 2 H2O. It participates in lipid metabolism; monounsaturated fatty acid biosynthesis. The protein operates within lipid metabolism; fatty acid metabolism. Functionally, delta(9)-fatty acid desaturase that acts preferentially on stearoyl-CoA (octadecanoyl-CoA) producing the monounsaturated oleoyl-CoA ((9Z)-octadecenoyl-CoA), one of the most abundant monounsaturated fatty acid in Caenorhabditis elegans phospholipids and triacylglycerols. Also acts on palmitoyl-CoA (hexadecanoyl-CoA), heptadecanoyl-CoA and (11E)-octadecenoyl-CoA (trans-vaccenoyl-CoA), the monounsaturated fatty acids (MUFAs) produced are further used by several other desaturases and elongases as substrates to synthesize polyunsaturated fatty acids (PUFAs) endogenously (PUFAs are essential for membrane structure and many cellular and physiological processes). Unlike plants, Caenorhabditis elegans desaturases seem to use fatty acyl-CoAs as substrates. Partially inhibits expression of genes involved in beta-oxidation, such as ech-1 and acs-2, perhaps signaling via the actions of one of its fatty acid products. May form part of a negative feedback loop with the transcription factor nhr-49 to limit beta-oxidation, in which nhr-49 stimulates expression of fat-7 and acs-2, and in turn fat-7 indirectly inhibits acs-2 and other genes also involved in beta-oxidation. In Caenorhabditis elegans, this protein is Delta(9)-fatty-acid desaturase fat-7 (fat-7).